Reading from the N-terminus, the 134-residue chain is Translation initiation factor 5A (134 aa).

Position 36 is a hypusine (Lys-36).

It belongs to the eIF-5A family.

The protein localises to the cytoplasm. Functions by promoting the formation of the first peptide bond. The protein is Translation initiation factor 5A (eIF5A) of Korarchaeum cryptofilum (strain OPF8).